The sequence spans 161 residues: Troponin C, slow skeletal and cardiac muscles (161 aa).

M1 bears the N-acetylmethionine mark. EF-hand domains lie at 16-51 (QKNE…LGQN), 52-87 (PTPE…CMKD), 92-127 (KTEE…TGET), and 128-161 (ITED…KGVE). Ca(2+) is bound by residues D65, D67, S69, T71, D105, N107, D109, Y111, E116, N143, D145, R147, and E152.

The protein belongs to the troponin C family.

In terms of biological role, troponin is the central regulatory protein of striated muscle contraction. Tn consists of three components: Tn-I which is the inhibitor of actomyosin ATPase, Tn-T which contains the binding site for tropomyosin and Tn-C. The binding of calcium to Tn-C abolishes the inhibitory action of Tn on actin filaments. This chain is Troponin C, slow skeletal and cardiac muscles (TNNC1), found in Coturnix japonica (Japanese quail).